A 293-amino-acid chain; its full sequence is Lysosomal amino acid transporter 1 homolog (293 aa).

Over 1 to 37 (MVWRTLVASNFSTCPNGSIQWIWDVFGECAQDGWDEA) the chain is Lumenal. Residue N10 is glycosylated (N-linked (GlcNAc...) asparagine). A PQ-loop 1 domain is found at 34-100 (WDEASVALGL…LADQLPLQTY (67 aa)). The chain crosses the membrane as a helical span at residues 38–58 (SVALGLVSIFCFAASTFPQYI). Residues 59 to 71 (KACKTGNMDQALS) lie on the Cytoplasmic side of the membrane. A helical membrane pass occupies residues 72–92 (LWFLLGWIGGDSCNLIGSFLA). At 93-96 (DQLP) the chain is on the lumenal side. Residues 97–117 (LQTYTAVYYVLADLLMLTLYF) traverse the membrane as a helical segment. Topologically, residues 118–126 (HYKFKKQPS) are cytoplasmic. The chain crosses the membrane as a helical span at residues 127 to 147 (LLSAPINSVLLFILGTVCITP). The Lumenal portion of the chain corresponds to 148–182 (LLSSTDPVAVPREGFRGRTLLSVEPGNKPFTKKEV). Residues 183–203 (VGFVIGSASSVLYLLSRLPQI) form a helical membrane-spanning segment. The 53-residue stretch at 191–243 (SSVLYLLSRLPQIRTNFVRQSTQGISYSLFALVMLGNTLYGLSVLLKNPEVGQ) folds into the PQ-loop 2 domain. The Cytoplasmic portion of the chain corresponds to 204 to 214 (RTNFVRQSTQG). A helical transmembrane segment spans residues 215–235 (ISYSLFALVMLGNTLYGLSVL). Over 236-254 (LKNPEVGQSEGSYLLHHLP) the chain is Lumenal. A helical transmembrane segment spans residues 255 to 275 (WLVGSLGVLLLDTIISIQFLV). Residues 276–293 (YRSHDADAASEREPLLPS) lie on the Cytoplasmic side of the membrane. Positions 290 to 291 (LL) match the Di-leucine motif motif.

Belongs to the laat-1 family.

The protein resides in the lysosome membrane. Functionally, amino acid transporter that specifically mediates the pH-dependent export of the cationic amino acids arginine, histidine and lysine from lysosomes. This Rattus norvegicus (Rat) protein is Lysosomal amino acid transporter 1 homolog (Slc66a1).